The chain runs to 1184 residues: Cartilage intermediate layer protein 1 (1184 aa).

A signal peptide spans 1 to 21 (MAAIKTWVFSFLVLEVTTVLG). N-linked (GlcNAc...) asparagine glycans are attached at residues Asn129 and Asn132. One can recognise a TSP type-1 domain in the interval 150–201 (HIWSSWSPWSKCSAACGHTGVQTRTRTCLAQTVSLCSEATEEGQLCMSQACT). Disulfide bonds link Cys161–Cys195, Cys165–Cys200, Cys177–Cys185, and Cys330–Cys376. The 85-residue stretch at 309-393 (PYIVMNPEMK…AVKSKVTQLT (85 aa)) folds into the Ig-like C2-type domain. N-linked (GlcNAc...) asparagine glycosylation is found at Asn346, Asn420, Asn550, Asn631, Asn1000, and Asn1056. A disordered region spans residues 1138-1184 (ARSPATGTVQGRVPAMRQQRASRGGLRRRGSMAPLRFSGVAQQPLSN).

In terms of assembly, monomer. Interacts with TGFB1. Cleaved into 2 chains possibly by a furin-like protease upon or preceding secretion. In terms of tissue distribution, expressed in articular and meniscal cartilage (at protein level). Primarily localizes to the superficial and intermediate zones of articular cartilage (at protein level).

Its subcellular location is the secreted. The protein resides in the extracellular space. It localises to the extracellular matrix. Probably plays a role in cartilage scaffolding. May act by antagonizing TGF-beta1 (TGFB1) and IGF1 functions. Has the ability to suppress IGF1-induced proliferation and sulfated proteoglycan synthesis, and inhibits ligand-induced IGF1R autophosphorylation. May inhibit TGFB1-mediated induction of cartilage matrix genes via its interaction with TGFB1. Overexpression may lead to impair chondrocyte growth and matrix repair and indirectly promote inorganic pyrophosphate (PPi) supersaturation in aging and osteoarthritis cartilage. This is Cartilage intermediate layer protein 1 (Cilp) from Mus musculus (Mouse).